The sequence spans 507 residues: Hexokinase-5 (507 aa).

Residues 4–24 (AAAVGTAVVVAAAVGVAVVLA) form a helical membrane-spanning segment. Positions 44 to 498 (RKVAAVIEDV…SGIGAALLAA (455 aa)) constitute a Hexokinase domain. Positions 99-237 (TGNEQGLFYA…GLDMKIAALV (139 aa)) are hexokinase small subdomain. ADP is bound by residues Gly-113, Thr-114, and Asn-115. 4 residues coordinate D-glucose: Thr-203, Lys-204, Asn-238, and Asp-239. Positions 238-487 (NDTVGTLAGG…SSVVTKLAND (250 aa)) are hexokinase large subdomain. Thr-262 contributes to the ADP binding site. Asn-265, Glu-293, and Glu-324 together coordinate D-glucose. Gly-452 contacts ADP.

This sequence belongs to the hexokinase family. Expressed in roots, leaves, flowers, immature seeds, endosperm and seed coat.

It is found in the plastid. The protein resides in the chloroplast outer membrane. The catalysed reaction is a D-hexose + ATP = a D-hexose 6-phosphate + ADP + H(+). It catalyses the reaction D-fructose + ATP = D-fructose 6-phosphate + ADP + H(+). The enzyme catalyses D-glucose + ATP = D-glucose 6-phosphate + ADP + H(+). It participates in carbohydrate metabolism; hexose metabolism. Its pathway is carbohydrate degradation; glycolysis; D-glyceraldehyde 3-phosphate and glycerone phosphate from D-glucose: step 1/4. Its function is as follows. Fructose and glucose phosphorylating enzyme. Functions as a glucose sensor for plant growth and photosynthesis. Is essential for pollen development, germination, and tube growth. Its activity is necessary for the starch utilization pathway during pollen germination and tube growth, as well as for starch biosynthesis during pollen maturation. The chain is Hexokinase-5 (HXK5) from Oryza sativa subsp. japonica (Rice).